Consider the following 179-residue polypeptide: ATP synthase subunit delta (179 aa).

Belongs to the ATPase delta chain family. F-type ATPases have 2 components, F(1) - the catalytic core - and F(0) - the membrane proton channel. F(1) has five subunits: alpha(3), beta(3), gamma(1), delta(1), epsilon(1). F(0) has three main subunits: a(1), b(2) and c(10-14). The alpha and beta chains form an alternating ring which encloses part of the gamma chain. F(1) is attached to F(0) by a central stalk formed by the gamma and epsilon chains, while a peripheral stalk is formed by the delta and b chains.

Its subcellular location is the cell inner membrane. In terms of biological role, f(1)F(0) ATP synthase produces ATP from ADP in the presence of a proton or sodium gradient. F-type ATPases consist of two structural domains, F(1) containing the extramembraneous catalytic core and F(0) containing the membrane proton channel, linked together by a central stalk and a peripheral stalk. During catalysis, ATP synthesis in the catalytic domain of F(1) is coupled via a rotary mechanism of the central stalk subunits to proton translocation. Its function is as follows. This protein is part of the stalk that links CF(0) to CF(1). It either transmits conformational changes from CF(0) to CF(1) or is implicated in proton conduction. The chain is ATP synthase subunit delta from Burkholderia orbicola (strain MC0-3).